Consider the following 417-residue polypeptide: Squamosa promoter-binding-like protein 14 (417 aa).

Composition is skewed to gly residues over residues 1–26 and 51–60; these read MEMASGGGAAAAAGGGVGGSGGGGGG and AGGGGTGSGS. 2 disordered regions span residues 1-32 and 51-102; these read MEMASGGGAAAAAGGGVGGSGGGGGGGDEHRQ and AGGG…PPPP. Low complexity predominate over residues 61-74; it reads GSASAAPPSSSSKA. Residues 75–84 show a composition bias toward gly residues; it reads AGGGRGGGGK. The segment at 101 to 178 adopts an SBP-type zinc-finger fold; that stretch reads PPRCQVEGCG…AGHNERRRRP (78 aa). Positions 104, 109, 126, 129, 145, 148, and 152 each coordinate Zn(2+). The short motif at 161–177 is the Bipartite nuclear localization signal element; the sequence is KRSCRRRLAGHNERRRR. Serine 163 carries the phosphoserine modification. Zn(2+) is bound at residue cysteine 164. A disordered region spans residues 387-417; sequence LQGNGPAPAPRIDPGSGSTFDQTSNTMDWSL. Residues 402 to 417 show a composition bias toward polar residues; that stretch reads SGSTFDQTSNTMDWSL.

As to quaternary structure, interacts with PCF1 and PCF2. Interacts with IPI1. Interacts with D53. Interacts with SLR1. Interacts (via C-terminus) with SHI1. In terms of processing, phosphorylated at Ser-163 in response to infection by the fungal pathogen Magnaporthe oryzae. Post-translationally, ubiquitinated by IPI1, which leads to proteasomal degradation. As to expression, expressed in young panicles. Expressed in the shoot apex at both the vegetative and reproductive stages. Highly expressed in the promordia of primary and secondary branches. Highly expressed in young panicles.

Its subcellular location is the nucleus. Functionally, transcriptional activator that binds to the SBP-box DNA core binding motif 5'-GTAC-3'. Can target the TCP motif 5'-TGGGCC/T-3' through interaction with PCF1 and PCF2. Key regulator of the plant architecture that controls shoot branching and panicle development. Promotes panicle branching. Promotes high grain yield. Binds to the promoters of TB1 and DEP1. Suppresses rice tillering mainly through positive regulation of TB1. Regulates plant height and panicle length through positive regulation of DEP1. Repressed by D53 in strigolactone (SL) signaling. Acts with D53 to mediate the SL-regulated tiller development. Functions as a direct downstream component of D53 in regulating tiller number and SL-induced gene expression. Binds directly to the D53 promoter and plays a critical role in the negative feedback regulation of SL-induced D53 expression. Involved in defense response against pathogens. Phosphorylated at Ser-163 in response to infection by the fungal pathogen Magnaporthe oryzae. Phosphorylation reduces SPL14/IPA1 binding to the GTAC site in the DEP1 promoter and enhances binding to the TGGGCC site in the WRKY45 promoter. Binding to the promoter of the pathogen defense gene WRKY45 activates its expression, leading to enhanced disease resistance. Reduces gibberellin-mediated disease susceptibility by stabilizing SLR1. Possesses transactivation activity in yeast cells. This is Squamosa promoter-binding-like protein 14 from Oryza sativa subsp. japonica (Rice).